Reading from the N-terminus, the 1441-residue chain is ABC transporter G family member 51 (1441 aa).

The segment at 52–71 (VLPDPDGLGGGDGGGRGEGQ) is disordered. The span at 58–69 (GLGGGDGGGRGE) shows a compositional bias: gly residues. Residues 154–428 (LISSHLLRPD…FKSLGFSLPP (275 aa)) enclose the ABC transporter 1 domain. 187–194 (GPPASGKS) is an ATP binding site. Residues 505–718 (SLVRACFARE…AQRAVSVNEF (214 aa)) enclose the ABC transmembrane type-2 1 domain. Helical transmembrane passes span 523–543 (FLYT…STLF), 558–578 (LYLA…FTEM), 615–635 (FIEA…APTV), 642–662 (MLLL…MGAI), 668–688 (IAST…GFVV), and 751–771 (FWIG…MFTL). Residues 838 to 1090 (MTFHNVNYYV…DMINYFQGIP (253 aa)) enclose the ABC transporter 2 domain. 883-890 (GASGSGKT) contacts ATP. The 218-residue stretch at 1163 to 1380 (TQFMVCLRKQ…TLRGVITSQL (218 aa)) folds into the ABC transmembrane type-2 2 domain. A run of 7 helical transmembrane segments spans residues 1184 to 1204 (VVRL…FWNV), 1214 to 1234 (ILLL…NNAS), 1271 to 1291 (VEIP…YFMV), 1300 to 1320 (LVLY…YGMV), 1330 to 1350 (MASV…GFLI), 1355 to 1375 (IPGW…LRGV), and 1413 to 1433 (ATVA…AISI).

The protein belongs to the ABC transporter superfamily. ABCG family. PDR (TC 3.A.1.205) subfamily.

It localises to the membrane. Functionally, may be a general defense protein. This Oryza sativa subsp. japonica (Rice) protein is ABC transporter G family member 51.